Here is a 295-residue protein sequence, read N- to C-terminus: Replication-associated protein A (295 aa).

The segment at 1–31 (MSSLPVSESEGEGSGTSVQVPSRGGQVTPGE) is disordered. The CRESS-DNA virus Rep endonuclease domain maps to 35–138 (SLRTKHVFLT…PESSWEFGKF (104 aa)). The short motif at 42–45 (FLTY) is the RCR-1 element. E76, H84, and H86 together coordinate a divalent metal cation. Positions 84-86 (HLH) match the RCR-2 motif. Residue Y124 is the For DNA cleavage activity of the active site. The short motif at 124-127 (YCMK) is the RCR-3 element. Positions 192–204 (SANALFPDPPQTY) are oligomerization.

This sequence belongs to the geminiviridae Rep protein family. In terms of assembly, homooligomer. Part of the C- and V-complexes which are RepA-Rep-DNA complexes involved in the c-sense and v-sense transcription.

The protein localises to the host nucleus. Its subcellular location is the host cytoplasm. In terms of biological role, implicated in enhancement of V-sense gene expression. Acts a an inhibitor of C-sense gene transcription. The chain is Replication-associated protein A from Avena sativa (Oat).